Consider the following 339-residue polypeptide: Anthranilate phosphoribosyltransferase (339 aa).

5-phospho-alpha-D-ribose 1-diphosphate-binding positions include glycine 81, 84 to 85 (GD), serine 89, 91 to 94 (NVST), 109 to 117 (KHGNRALSS), and alanine 121. An anthranilate-binding site is contributed by glycine 81. A Mg(2+)-binding site is contributed by serine 93. Position 112 (asparagine 112) interacts with anthranilate. Arginine 167 contributes to the anthranilate binding site. Residues aspartate 226 and glutamate 227 each coordinate Mg(2+).

The protein belongs to the anthranilate phosphoribosyltransferase family. Homodimer. Requires Mg(2+) as cofactor.

It carries out the reaction N-(5-phospho-beta-D-ribosyl)anthranilate + diphosphate = 5-phospho-alpha-D-ribose 1-diphosphate + anthranilate. It participates in amino-acid biosynthesis; L-tryptophan biosynthesis; L-tryptophan from chorismate: step 2/5. In terms of biological role, catalyzes the transfer of the phosphoribosyl group of 5-phosphorylribose-1-pyrophosphate (PRPP) to anthranilate to yield N-(5'-phosphoribosyl)-anthranilate (PRA). The protein is Anthranilate phosphoribosyltransferase of Rhodopseudomonas palustris (strain BisA53).